The sequence spans 415 residues: MSQGTLYANFRIRTWVPRGLVKALKLDVKVVTPDAAAEQFARDFPLKKVPAFVGPKGYKLTEAMAINYYLVKLSQDDKMKTQLLGADDDLNAQAQIIRWQSLANSDLCIQIANTIVPLKGGAPYNKKSVDSAMDAVDKIVDIFENRLKNYTYLATENISLADLVAASIFTRYFESLFGTEWRAQHPAIVRWFNTVRASPFLKDEYKDFKFADKPLSPPQKKKEKKAPAAAPAASKKKEEAKPAATETETSSKKPKHPLELLGKSTFVLDDWKRKYSNEDTRPVALPWFWEHYNPEEYSLWKVTYKYNDELTLTFMSNNLVGGFFNRLSASTKYMFGCLVVYGENNNNGIVGAVMVRGQDYVPAFDVAPDWESYDYAKLDPTNDDDKEFINNMWAWDKPVSVNGEPKEIVDGKVLK.

Ser2 is modified (N-acetylserine). Residues 2–78 (SQGTLYANFR…YLVKLSQDDK (77 aa)) form the GST N-terminal domain. Thr32 is modified (phosphothreonine). Positions 89 to 215 (DLNAQAQIIR…KDFKFADKPL (127 aa)) constitute a GST C-terminal domain. Residues 212 to 256 (DKPLSPPQKKKEKKAPAAAPAASKKKEEAKPAATETETSSKKPKH) are disordered. Residues 254–415 (PKHPLELLGK…KEIVDGKVLK (162 aa)) form the EF-1-gamma C-terminal domain.

The eukaryotic elongation factor 1 complex (eEF1) is probably a heterohexamer. Two trimeric complexes, each composed of eEF1A (TEF1 or TEF2), eEF1Balpha (EFB1) and eEF1Bgamma (CAM1 or TEF4), are probably dimerized via the eF1Bgamma subunits. The eEF1B subcomplex with the GEF activity is formed of eEF1Balpha and eEF1Bgamma. CAM1 interacts with EFB1. Component of a complex bound to MXR1 promoter region.

It is found in the cytoplasm. The protein localises to the nucleus. Its pathway is protein biosynthesis; polypeptide chain elongation. Its function is as follows. Subunit of the eukaryotic elongation factor 1 complex (eEF1). Probably plays a role in anchoring the complex to other cellular components. May be involved in transcriptional regulation of MXR1. In Saccharomyces cerevisiae (strain ATCC 204508 / S288c) (Baker's yeast), this protein is Elongation factor 1-gamma 1 (CAM1).